The following is an 868-amino-acid chain: Monofunctional pimaradiene synthase (868 aa).

Residues Asp620, Asp624, Asn764, Thr768, and Glu772 each contribute to the Mg(2+) site.

Belongs to the terpene synthase family. Tpsd subfamily. The cofactor is Mg(2+).

It catalyses the reaction (+)-copalyl diphosphate = (-)-pimara-8(14),15-diene + diphosphate. It functions in the pathway terpene metabolism; oleoresin biosynthesis. In terms of biological role, involved in defensive oleoresin formation in conifers in response to insect attack or other injury. Involved in diterpene (C20) olefins biosynthesis. Monofunctional enzyme lacking the DXDD motif in the class II active site relevant for the cyclization of geranylgeranyl diphosphate (GGPP). Requires (+)-copalyl diphosphate ((+)-CPP) as substrate, but no activity with GGPP or ent-CPP. Pimaradiene is the major products of the enzyme. The chain is Monofunctional pimaradiene synthase from Pinus banksiana (Jack pine).